We begin with the raw amino-acid sequence, 324 residues long: E3 ubiquitin-protein ligase SIAH2 (324 aa).

Residues 1–15 (MSRPSSTGPSANKPC) are compositionally biased toward polar residues. The disordered stretch occupies residues 1 to 42 (MSRPSSTGPSANKPCSKQPPPQPQHTPSPAAPPAAATISAAG). Ser-6 is modified (phosphoserine). Ser-16 bears the Phosphoserine; by DYRK2 mark. Over residues 17 to 32 (KQPPPQPQHTPSPAAP) the composition is skewed to pro residues. Thr-26 carries the phosphothreonine; by DYRK2 modification. The residue at position 28 (Ser-28) is a Phosphoserine; by DYRK2 and MAPK14. A compositionally biased stretch (low complexity) spans 33-42 (PAAATISAAG). Ser-68 carries the phosphoserine; by DYRK2 modification. The segment at 80–115 (CPVCFDYVLPPILQCQAGHLVCNQCRQKLSCCPTCR) adopts an RING-type zinc-finger fold. At Thr-119 the chain carries Phosphothreonine; by DYRK2. The SBD stretch occupies residues 130–322 (VASAVLFPCK…LGINVTISTC (193 aa)). An SIAH-type zinc finger spans residues 133–193 (AVLFPCKYAT…VMSHLMHAHK (61 aa)). Zn(2+) contacts are provided by Cys-138, Cys-145, His-157, Cys-161, Cys-168, Cys-175, His-187, and His-192.

Belongs to the SINA (Seven in absentia) family. In terms of assembly, homodimer. Interacts with UBE2E2. Interacts with PEG3. Interacts with VAV1, without mediating its ubiquitin-mediated degradation. Interacts with CACYBP/SIP. Probable component of some large E3 complex possibly composed of UBE2D1, SIAH2, CACYBP/SIP, SKP1, APC and TBL1X. Interacts with PEG10, which may inhibit its activity. Interacts with EGLN2 and SNCAIP. Interacts with DYRK2. Interacts with NR1D1 and NR1D2. Interacts with DCC. Interacts with AXIN1. Post-translationally, phosphorylated at Ser-28 by MAPK14, which mediates the degradation by the proteasome of EGLN3. Phosphorylated at Ser-28 by DYRK2; this increases the ubiquitin ligase activity and promotes degradation of EGLN3. In terms of tissue distribution, widely expressed at low level.

The protein localises to the cytoplasm. Its subcellular location is the nucleus. It carries out the reaction S-ubiquitinyl-[E2 ubiquitin-conjugating enzyme]-L-cysteine + [acceptor protein]-L-lysine = [E2 ubiquitin-conjugating enzyme]-L-cysteine + N(6)-ubiquitinyl-[acceptor protein]-L-lysine.. It participates in protein modification; protein ubiquitination. With respect to regulation, inhibited by interaction with SNCAIP (isoform 2, but not isoform 1). May be inhibited by interaction with PEG10. Its function is as follows. E3 ubiquitin-protein ligase that mediates ubiquitination and subsequent proteasomal degradation of target proteins. E3 ubiquitin ligases accept ubiquitin from an E2 ubiquitin-conjugating enzyme in the form of a thioester and then directly transfers the ubiquitin to targeted substrates. Mediates E3 ubiquitin ligase activity either through direct binding to substrates or by functioning as the essential RING domain subunit of larger E3 complexes. Triggers the ubiquitin-mediated degradation of many substrates, including proteins involved in transcription regulation (GPS2, POU2AF1, PML, NCOR1), a cell surface receptor (DCC), an antiapoptotic protein (BAG1), and a protein involved in synaptic vesicle function in neurons (SYP). Mediates ubiquitination and proteasomal degradation of DYRK2 in response to hypoxia. It is thereby involved in apoptosis, tumor suppression, cell cycle, transcription and signaling processes. Has some overlapping function with SIAH1. Triggers the ubiquitin-mediated degradation of TRAF2, whereas SIAH1 does not. Promotes monoubiquitination of SNCA. Regulates cellular clock function via ubiquitination of the circadian transcriptional repressors NR1D1 and NR1D2 leading to their proteasomal degradation. Plays an important role in mediating the rhythmic degradation/clearance of NR1D1 and NR1D2 contributing to their circadian profile of protein abundance. Mediates ubiquitination and degradation of EGLN2 and EGLN3 in response to the unfolded protein response (UPR), leading to their degradation and subsequent stabilization of ATF4. Also part of the Wnt signaling pathway in which it mediates the Wnt-induced ubiquitin-mediated proteasomal degradation of AXIN1. The polypeptide is E3 ubiquitin-protein ligase SIAH2 (SIAH2) (Homo sapiens (Human)).